A 554-amino-acid polypeptide reads, in one-letter code: Valerianol synthase TPS1B (554 aa).

Mg(2+) contacts are provided by aspartate 307 and aspartate 311. The DDXXD motif motif lies at 326–330; sequence VQRWD. 3 residues coordinate Mg(2+): aspartate 452, serine 456, and glutamate 460.

It belongs to the terpene synthase family. It depends on Mg(2+) as a cofactor.

The enzyme catalyses (2E,6E)-farnesyl diphosphate + H2O = valerianol + diphosphate. It functions in the pathway secondary metabolite biosynthesis; terpenoid biosynthesis. Terpene synthase that catalyzes the biosynthesis of the terpene valerianol, which is a volatile compound of floral scent. This chain is Valerianol synthase TPS1B, found in Camellia hiemalis (Camellia).